The sequence spans 111 residues: Inner membrane protein YdgC (111 aa).

Residues 1-26 (MGLVIKAALGALVVLLIGVLAKTKNY) lie on the Cytoplasmic side of the membrane. A helical transmembrane segment spans residues 27–47 (YIAGLIPLFPTFALIAHYIVA). Topologically, residues 48–58 (SERGIEALRAT) are periplasmic. Residues 59 to 79 (IIFSMWSIIPYFVYLVSLWYF) form a helical membrane-spanning segment. Residues 80 to 87 (TGMMRLPA) lie on the Cytoplasmic side of the membrane. Residues 88 to 108 (AFVGSVACWGISAWVLIICWI) form a helical membrane-spanning segment. At 109–111 (KLH) the chain is on the periplasmic side.

This sequence to P.aeruginosa GlpM.

It localises to the cell inner membrane. The sequence is that of Inner membrane protein YdgC (ydgC) from Escherichia coli O157:H7.